Here is a 296-residue protein sequence, read N- to C-terminus: Cell surface glycoprotein CD200 receptor 3 (296 aa).

The first 25 residues, 1 to 25 (MHALGRTLALMLLIFITILVPESSC), serve as a signal peptide directing secretion. Topologically, residues 26–245 (SVKGREEIPP…NRGTTSILPS (220 aa)) are extracellular. An Ig-like V-type domain is found at 48-162 (PDGVGVTMEI…GIFQERHSIQ (115 aa)). Cysteine 75 and cysteine 146 are disulfide-bonded. The 82-residue stretch at 151-232 (TDGIFQERHS…SHLTDNWILS (82 aa)) folds into the Ig-like C2-type domain. N-linked (GlcNAc...) asparagine glycans are attached at residues asparagine 167 and asparagine 199. Cysteine 172 and cysteine 220 are oxidised to a cystine. The chain crosses the membrane as a helical span at residues 246-266 (LLSILYVKLAVTVLIVGFAFF). Residues 267–296 (QKRNYFSSRDLVFMKERRSKRSVWQREALG) lie on the Cytoplasmic side of the membrane.

The protein belongs to the CD200R family. In terms of assembly, isoform 3 interacts with TYROBP. Isoform 8 does not interact with TYROBP. Expressed in uterus and bone marrow-derived mast cells (at protein level). Expressed in uterus, spleen, bone marrow-derived dendritic, basophil and mast cells. Expressed in the lung of N.brasiliensis-infected mice. Weakly expressed in brain, testis, lung and thymus.

It localises to the membrane. Its function is as follows. According to PubMed:15187158 isoform 4 is a receptor for the CD200 cell surface glycoprotein. According to PubMed:16081818 isoform 4 is not a receptor for the CD200/OX2 cell surface glycoprotein. Isoform 1, isoform 2 and isoform 3 are involved in the recruitment or surface expression of the TYROBP receptor. Isoform 6, isoform 7 and isoform 8 are not involved in the recruitment or surface expression of the TYROBP receptor. The protein is Cell surface glycoprotein CD200 receptor 3 (Cd200r3) of Mus musculus (Mouse).